Consider the following 90-residue polypeptide: Gene 56 protein (90 aa).

The Glutaredoxin domain occupies 1–90 (MRTMFTPITI…DYYTASETGL (90 aa)). A disulfide bond links C16 and C19.

The protein is Gene 56 protein (56) of Mycobacterium phage D29 (Mycobacteriophage D29).